Here is a 353-residue protein sequence, read N- to C-terminus: Peroxidase C1A (353 aa).

A signal peptide spans 1–30 (MHFSSSSTLFTCITLIPLVCLILHASLSDA). Residue Gln31 is modified to Pyrrolidone carboxylic acid. Intrachain disulfides connect Cys41/Cys121, Cys74/Cys79, Cys127/Cys331, and Cys207/Cys239. Asn43 is a glycosylation site (N-linked (GlcNAc...) asparagine). His72 functions as the Proton acceptor in the catalytic mechanism. Positions 73, 76, 78, 80, and 82 each coordinate Ca(2+). A glycan (N-linked (GlcNAc...) asparagine) is linked at Asn87. Glu94 serves as a coordination point for Ca(2+). A substrate-binding site is contributed by Pro169. N-linked (GlcNAc...) asparagine glycosylation occurs at Asn188. Heme b is bound at residue His200. Ca(2+) is bound at residue Thr201. Asn216, Asn228, and Asn244 each carry an N-linked (GlcNAc...) asparagine glycan. The Ca(2+) site is built by Asp252, Thr255, and Asp260. Residues Asn285 and Asn298 are each glycosylated (N-linked (GlcNAc...) asparagine). Residues 339–353 (LLHDMVEVVDFVSSM) constitute a propeptide that is removed on maturation.

This sequence belongs to the peroxidase family. Classical plant (class III) peroxidase subfamily. In terms of assembly, monomer. Ca(2+) serves as cofactor. Heme b is required as a cofactor.

It is found in the secreted. Its subcellular location is the vacuole. It catalyses the reaction 2 a phenolic donor + H2O2 = 2 a phenolic radical donor + 2 H2O. Its function is as follows. Removal of H(2)O(2), oxidation of toxic reductants, biosynthesis and degradation of lignin, suberization, auxin catabolism, response to environmental stresses such as wounding, pathogen attack and oxidative stress. These functions might be dependent on each isozyme/isoform in each plant tissue. The chain is Peroxidase C1A (PRXC1A) from Armoracia rusticana (Horseradish).